Consider the following 205-residue polypeptide: Guanylyl cyclase-activating protein 1 (205 aa).

G2 carries N-myristoyl glycine lipidation. Deamidated asparagine is present on N3. 4 EF-hand domains span residues 30-48, 50-85, 86-121, and 129-164; these read SGQL…KNLS, ASNQ…VLKG, KVEQ…IRAI, and TAEE…DELL. Ca(2+) contacts are provided by D63, N65, D67, Y69, E74, D99, D101, N103, C105, E110, D142, N144, D146, E148, and E153.

In terms of tissue distribution, retina.

Its function is as follows. Regulatory protein that inhibits guanylyl cyclase when free calcium ions concentration is elevated. This Ca(2+)-sensitive regulation of retinal guanylyl cyclase is a key event in recovery of the dark state of rod photoreceptors following light exposure. In Lithobates pipiens (Northern leopard frog), this protein is Guanylyl cyclase-activating protein 1 (GUCA1A).